An 863-amino-acid polypeptide reads, in one-letter code: MRTDTPQAVNLADYRPFPFAIETTRLVFDLHPTRTRVSAELSVRRTGGKNEPLVLNGERLKLVSIAIDGRPLAAGEYGVDAERLTIAEAPDAFVLTTEVEIDPSSNKALMGLYMSGGRFCTQCEAEGFRTITYFPDRPDVLSRYSVRIEADGKFPHLLSNGNPVASGSLDGGRHFAEWSDPFPKPSYLFALVAGDLDVLADKFITMSGREVALRVFVDPGQASRAAYALDSLKRAMKWDEEAFGREYDLDLFMIVAVRDFNFGAMENKGLNIFNSSLLLADPQTATDLDYERIEAVVAHEYFHNWTGNRITCRDWFQLCLKEGFTVFRDQGLSADMRGAAVQRIKDVRALRARQFAEDAGPLAHPVRPSSYLKIDNFYTATIYEKGAEIIRMLKAILGAPAFRKGCDLYFQRHDGEATTVEAFIACFAEASGRDLSGFFGWYEQAGTPSVTIETAYDAAAGALTLTLTQSTSPTPGQPDKKPLPIPIAIGLLAADGRVLRDTEIVLLDQAQMTVRWDSIPEPPVLSALRGFSAPVNLSTDARPSDRYVLFGSDTDLFNRWEAGQTLARDLILTRAAGAPDEVGEERYADALGRALVDDAAEPAFKALLLALPSEPDLALMFEAADPAALHAARDHLRTRIAVHLGDLLRRLHGEMQINGEFSSDAAAAGRRALRNACAEALSADPHAENLARLLGHFGAARNMTDMIGGLYPMVAMGGVPREKALESFHHAWRTEPLVLDKWFAVQGRDPNPDALERVIALTQHPDFEPTNPNRLRALVSTFANFNPARFHDPSGAGYAFLADEILKVDAFNPMTAARLVEPLGGWRRYKPELGDLMRAQLERIVAHPNLSKNVLELASKALG.

Substrate is bound by residues Glu-124 and 263 to 267 (GAMEN). His-299 contributes to the Zn(2+) binding site. Glu-300 serves as the catalytic Proton acceptor. His-303 and Glu-322 together coordinate Zn(2+).

It belongs to the peptidase M1 family. The cofactor is Zn(2+).

It catalyses the reaction Release of an N-terminal amino acid, Xaa-|-Yaa- from a peptide, amide or arylamide. Xaa is preferably Ala, but may be most amino acids including Pro (slow action). When a terminal hydrophobic residue is followed by a prolyl residue, the two may be released as an intact Xaa-Pro dipeptide.. Its function is as follows. Aminopeptidase N is involved in the degradation of intracellular peptides generated by protein breakdown during normal growth as well as in response to nutrient starvation. The chain is Aminopeptidase N (pepN) from Caulobacter vibrioides (strain ATCC 19089 / CIP 103742 / CB 15) (Caulobacter crescentus).